A 323-amino-acid chain; its full sequence is Methionyl-tRNA formyltransferase (323 aa).

Residue 115-118 (SLLP) participates in (6S)-5,6,7,8-tetrahydrofolate binding.

This sequence belongs to the Fmt family.

It carries out the reaction L-methionyl-tRNA(fMet) + (6R)-10-formyltetrahydrofolate = N-formyl-L-methionyl-tRNA(fMet) + (6S)-5,6,7,8-tetrahydrofolate + H(+). Attaches a formyl group to the free amino group of methionyl-tRNA(fMet). The formyl group appears to play a dual role in the initiator identity of N-formylmethionyl-tRNA by promoting its recognition by IF2 and preventing the misappropriation of this tRNA by the elongation apparatus. This is Methionyl-tRNA formyltransferase from Lactococcus lactis subsp. cremoris (strain SK11).